Here is a 120-residue protein sequence, read N- to C-terminus: Large ribosomal subunit protein uL18 (120 aa).

This sequence belongs to the universal ribosomal protein uL18 family. In terms of assembly, part of the 50S ribosomal subunit; part of the 5S rRNA/L5/L18/L25 subcomplex. Contacts the 5S and 23S rRNAs.

In terms of biological role, this is one of the proteins that bind and probably mediate the attachment of the 5S RNA into the large ribosomal subunit, where it forms part of the central protuberance. This Rippkaea orientalis (strain PCC 8801 / RF-1) (Cyanothece sp. (strain PCC 8801)) protein is Large ribosomal subunit protein uL18.